Here is a 156-residue protein sequence, read N- to C-terminus: SsrA-binding protein (156 aa).

This sequence belongs to the SmpB family.

It localises to the cytoplasm. Required for rescue of stalled ribosomes mediated by trans-translation. Binds to transfer-messenger RNA (tmRNA), required for stable association of tmRNA with ribosomes. tmRNA and SmpB together mimic tRNA shape, replacing the anticodon stem-loop with SmpB. tmRNA is encoded by the ssrA gene; the 2 termini fold to resemble tRNA(Ala) and it encodes a 'tag peptide', a short internal open reading frame. During trans-translation Ala-aminoacylated tmRNA acts like a tRNA, entering the A-site of stalled ribosomes, displacing the stalled mRNA. The ribosome then switches to translate the ORF on the tmRNA; the nascent peptide is terminated with the 'tag peptide' encoded by the tmRNA and targeted for degradation. The ribosome is freed to recommence translation, which seems to be the essential function of trans-translation. The polypeptide is SsrA-binding protein (Clostridium botulinum (strain Loch Maree / Type A3)).